Consider the following 246-residue polypeptide: Aspartate/glutamate leucyltransferase (246 aa).

This sequence belongs to the R-transferase family. Bpt subfamily.

It is found in the cytoplasm. The enzyme catalyses N-terminal L-glutamyl-[protein] + L-leucyl-tRNA(Leu) = N-terminal L-leucyl-L-glutamyl-[protein] + tRNA(Leu) + H(+). It catalyses the reaction N-terminal L-aspartyl-[protein] + L-leucyl-tRNA(Leu) = N-terminal L-leucyl-L-aspartyl-[protein] + tRNA(Leu) + H(+). Functionally, functions in the N-end rule pathway of protein degradation where it conjugates Leu from its aminoacyl-tRNA to the N-termini of proteins containing an N-terminal aspartate or glutamate. The polypeptide is Aspartate/glutamate leucyltransferase (Rhodospirillum rubrum (strain ATCC 11170 / ATH 1.1.1 / DSM 467 / LMG 4362 / NCIMB 8255 / S1)).